The following is a 55-amino-acid chain: Small ribosomal subunit protein eS31 (55 aa).

Zn(2+)-binding residues include C26, C29, C44, and C47.

This sequence belongs to the eukaryotic ribosomal protein eS31 family. As to quaternary structure, part of the 30S ribosomal subunit. Zn(2+) is required as a cofactor.

The sequence is that of Small ribosomal subunit protein eS31 from Archaeoglobus fulgidus (strain ATCC 49558 / DSM 4304 / JCM 9628 / NBRC 100126 / VC-16).